A 125-amino-acid chain; its full sequence is Cyclic diguanosine monophosphate-binding protein PA4608 (125 aa).

Asp-6–Arg-13 lines the 3',3'-c-di-GMP pocket. The region spanning Glu-7 to Glu-103 is the PilZ domain. The RXXXR motif; surrounds the surface of the c-di-GMP binding site motif lies at Arg-9 to Arg-13. The DXSXXG motif; surrounds the surface of the c-di-GMP binding site motif lies at Asp-35–Gly-40. A 3',3'-c-di-GMP-binding site is contributed by Trp-77.

Monomer in both c-di-GMP-bound and free forms.

Its function is as follows. Binds the second messenger bis-(3'-5') cyclic dimeric guanosine monophosphate (c-di-GMP). Can bind two c-di-GMP molecules per monomer. May play a role in bacterial second-messenger regulated processes. Binding to c-di-GMP induces a conformational change of the C- and N-termini resulting in the exposure of a highly negative surface on one side of the protein to a possible effector protein. This chain is Cyclic diguanosine monophosphate-binding protein PA4608, found in Pseudomonas aeruginosa (strain ATCC 15692 / DSM 22644 / CIP 104116 / JCM 14847 / LMG 12228 / 1C / PRS 101 / PAO1).